The chain runs to 537 residues: CTP synthase (537 aa).

Positions 1-268 are amidoligase domain; it reads MGETKYIFVT…DSTILEKMGL (268 aa). Residue Ser15 coordinates CTP. Ser15 is a binding site for UTP. 16 to 21 contributes to the ATP binding site; the sequence is SLGKGI. Position 56 (Tyr56) interacts with L-glutamine. Asp73 contributes to the ATP binding site. Asp73 and Glu143 together coordinate Mg(2+). CTP-binding positions include 150–152, 189–194, and Lys225; these read DIE and KTKPTQ. UTP-binding positions include 189–194 and Lys225; that span reads KTKPTQ. The Glutamine amidotransferase type-1 domain maps to 296–537; it reads NIALVGKYDL…VKAAIENEKN (242 aa). Position 357 (Gly357) interacts with L-glutamine. Cys384 functions as the Nucleophile; for glutamine hydrolysis in the catalytic mechanism. L-glutamine contacts are provided by residues 385-388, Glu408, and Arg465; that span reads LGMQ. Catalysis depends on residues His510 and Glu512.

It belongs to the CTP synthase family. In terms of assembly, homotetramer.

The catalysed reaction is UTP + L-glutamine + ATP + H2O = CTP + L-glutamate + ADP + phosphate + 2 H(+). It catalyses the reaction L-glutamine + H2O = L-glutamate + NH4(+). The enzyme catalyses UTP + NH4(+) + ATP = CTP + ADP + phosphate + 2 H(+). Its pathway is pyrimidine metabolism; CTP biosynthesis via de novo pathway; CTP from UDP: step 2/2. Its activity is regulated as follows. Allosterically activated by GTP, when glutamine is the substrate; GTP has no effect on the reaction when ammonia is the substrate. The allosteric effector GTP functions by stabilizing the protein conformation that binds the tetrahedral intermediate(s) formed during glutamine hydrolysis. Inhibited by the product CTP, via allosteric rather than competitive inhibition. In terms of biological role, catalyzes the ATP-dependent amination of UTP to CTP with either L-glutamine or ammonia as the source of nitrogen. Regulates intracellular CTP levels through interactions with the four ribonucleotide triphosphates. This Bacteroides thetaiotaomicron (strain ATCC 29148 / DSM 2079 / JCM 5827 / CCUG 10774 / NCTC 10582 / VPI-5482 / E50) protein is CTP synthase.